The sequence spans 458 residues: ATP synthase subunit beta (458 aa).

148–155 (GGAGVGKT) contributes to the ATP binding site.

Belongs to the ATPase alpha/beta chains family. F-type ATPases have 2 components, CF(1) - the catalytic core - and CF(0) - the membrane proton channel. CF(1) has five subunits: alpha(3), beta(3), gamma(1), delta(1), epsilon(1). CF(0) has three main subunits: a(1), b(2) and c(9-12). The alpha and beta chains form an alternating ring which encloses part of the gamma chain. CF(1) is attached to CF(0) by a central stalk formed by the gamma and epsilon chains, while a peripheral stalk is formed by the delta and b chains.

The protein localises to the cell inner membrane. It carries out the reaction ATP + H2O + 4 H(+)(in) = ADP + phosphate + 5 H(+)(out). Functionally, produces ATP from ADP in the presence of a proton gradient across the membrane. The catalytic sites are hosted primarily by the beta subunits. The polypeptide is ATP synthase subunit beta (Halorhodospira halophila (strain DSM 244 / SL1) (Ectothiorhodospira halophila (strain DSM 244 / SL1))).